Consider the following 682-residue polypeptide: Homeobox-leucine zipper protein HDG7 (682 aa).

The interval 33–65 is disordered; sequence LSDDSFDAMSGDEDKQEQRPKKKKRKTKYHRHT. Positions 52 to 65 are enriched in basic residues; that stretch reads PKKKKRKTKYHRHT. The segment at residues 57–116 is a DNA-binding region (homeobox); it reads RKTKYHRHTSYQIQELESFFKECPHPNEKQRLELGKKLTLESKQIKFWFQNRRTQMKTQL. A coiled-coil region spans residues 105–186; that stretch reads FQNRRTQMKT…LDRICALANR (82 aa). Residues 214 to 429 form the START domain; the sequence is SGGTSLMFMD…LQRQCESFTM (216 aa).

It belongs to the HD-ZIP homeobox family. Class IV subfamily. Interacts with AIL7/PLT7. As to expression, expressed in cells around the base of leaf primordia, in the outermost 2 to 3 cell layers along the boundary between two leaf primordia. Expressed in lateral root primordia and tips, and in the epidermal boundaries of two cotyledons at heart-stage embryo.

It is found in the nucleus. Probable transcription factor that binds to the DNA sequence 5'-GCATTAAATGC-3'. Seems to promote cell differentiation. In Arabidopsis thaliana (Mouse-ear cress), this protein is Homeobox-leucine zipper protein HDG7.